Here is a 308-residue protein sequence, read N- to C-terminus: Methionyl-tRNA formyltransferase (308 aa).

(6S)-5,6,7,8-tetrahydrofolate is bound at residue 109 to 112; the sequence is SLLP.

It belongs to the Fmt family.

The catalysed reaction is L-methionyl-tRNA(fMet) + (6R)-10-formyltetrahydrofolate = N-formyl-L-methionyl-tRNA(fMet) + (6S)-5,6,7,8-tetrahydrofolate + H(+). Its function is as follows. Attaches a formyl group to the free amino group of methionyl-tRNA(fMet). The formyl group appears to play a dual role in the initiator identity of N-formylmethionyl-tRNA by promoting its recognition by IF2 and preventing the misappropriation of this tRNA by the elongation apparatus. This chain is Methionyl-tRNA formyltransferase, found in Salinispora arenicola (strain CNS-205).